We begin with the raw amino-acid sequence, 72 residues long: Translation initiation factor IF-1 (72 aa).

Residues 1 to 72 enclose the S1-like domain; sequence MAKEDVIEVE…TRGRITYRYK (72 aa). Tyr60 is modified (phosphotyrosine).

The protein belongs to the IF-1 family. As to quaternary structure, component of the 30S ribosomal translation pre-initiation complex which assembles on the 30S ribosome in the order IF-2 and IF-3, IF-1 and N-formylmethionyl-tRNA(fMet); mRNA recruitment can occur at any time during PIC assembly.

Its subcellular location is the cytoplasm. Its function is as follows. One of the essential components for the initiation of protein synthesis. Stabilizes the binding of IF-2 and IF-3 on the 30S subunit to which N-formylmethionyl-tRNA(fMet) subsequently binds. Helps modulate mRNA selection, yielding the 30S pre-initiation complex (PIC). Upon addition of the 50S ribosomal subunit IF-1, IF-2 and IF-3 are released leaving the mature 70S translation initiation complex. The protein is Translation initiation factor IF-1 of Shouchella clausii (strain KSM-K16) (Alkalihalobacillus clausii).